The sequence spans 131 residues: Small ribosomal subunit protein uS11 (131 aa).

It belongs to the universal ribosomal protein uS11 family. In terms of assembly, part of the 30S ribosomal subunit. Interacts with proteins S7 and S18. Binds to IF-3.

Functionally, located on the platform of the 30S subunit, it bridges several disparate RNA helices of the 16S rRNA. Forms part of the Shine-Dalgarno cleft in the 70S ribosome. The sequence is that of Small ribosomal subunit protein uS11 from Endomicrobium trichonymphae.